The primary structure comprises 953 residues: Ribonuclease E (953 aa).

2 disordered regions span residues 1–23 and 118–314; these read MIDGAPPSDPPEPSQHEELPDRL and VAPQ…RRRP. Positions 14 to 23 are enriched in basic and acidic residues; the sequence is SQHEELPDRL. Acidic residues predominate over residues 127 to 150; it reads LADDEDVDDGPDYVADDSDADDEG. Over residues 157-169 the composition is skewed to basic residues; it reads NRRRRRGRRGRGR. Positions 183-193 are enriched in polar residues; it reads DQQSEPRAQQF. The span at 199–223 shows a compositional bias: acidic residues; it reads AETDDGDDRDSEDTEAGDNGEDENG. Over residues 230–240 the composition is skewed to basic residues; sequence RRRRRRRRRKS. 2 stretches are compositionally biased toward basic and acidic residues: residues 263–272 and 294–311; these read VHERVPRAGD and TRLEAKRQRRRDGRDAGR. The 78-residue stretch at 376–453 folds into the S1 motif domain; that stretch reads GNIYLGIVQN…GHKGARLTTQ (78 aa). 2 residues coordinate Mg(2+): aspartate 647 and aspartate 691. Zn(2+)-binding residues include cysteine 749 and cysteine 752. 2 disordered regions span residues 766 to 808 and 822 to 953; these read SAAA…APGE and LAGR…IRLD. Positions 848–915 are enriched in acidic residues; sequence DLDDTAQADF…DADVDEEDAA (68 aa).

Belongs to the RNase E/G family. As to quaternary structure, assembles into a homotetramer formed by a dimer of dimers. Interacts with DNA-binding protein HU (hupB). Mg(2+) serves as cofactor. Zn(2+) is required as a cofactor.

It is found in the cytoplasm. The catalysed reaction is Endonucleolytic cleavage of single-stranded RNA in A- and U-rich regions.. Functionally, endoribonuclease that plays a central role in RNA processing and decay. Plays a major role in pre-16S rRNA maturation, probably generating the mature 5'-end, and a minor role in pre-5S and pre-23S rRNA maturation. Probably also processes tRNA. RNase E and HupB jointly contribute to cellular adaptation to changing growth conditions and survival during antibiotic treatment and in the host. The protein is Ribonuclease E of Mycobacterium tuberculosis (strain ATCC 25618 / H37Rv).